The primary structure comprises 372 residues: MAKRDYYEVLGLSKGASKEEIKRAYKKLSKKYHPDINKEADAEDKFKEIAEAYEVLSDDQKKAQYDQFGHAGMGQGAGFGGQDFGGFGGFEDIFSSFFGGGARRDPNAPRQGNDLQYQMNVTFEEAVFGAEKEISVKKEVECDTCDGSGAQPGTNIKTCSTCGGRGNVHVEQNTPFGRVRSERTCPDCGGTGKEFEEKCSDCGGTGRKVKTVKISVKVPAGVDTGQQIRLSGQGEPGINGGPAGDLYVVFNVQDHAYFDRSGEDIFYTLELSIAQAALGDEVEVPTLEGKVKLTIPAGTQTGKRFRLKEKGVQNVHGYGRGDEYVTVKVMTPVKMTNRQAELLREFAEIDGHDITEQPSNFFDKTKRFFKGE.

The 65-residue stretch at 5–69 (DYYEVLGLSK…QKKAQYDQFG (65 aa)) folds into the J domain. The CR-type zinc finger occupies 129–211 (GAEKEISVKK…CGGTGRKVKT (83 aa)). Zn(2+)-binding residues include cysteine 142, cysteine 145, cysteine 159, cysteine 162, cysteine 185, cysteine 188, cysteine 199, and cysteine 202. CXXCXGXG motif repeat units follow at residues 142-149 (CDTCDGSG), 159-166 (CSTCGGRG), 185-192 (CPDCGGTG), and 199-206 (CSDCGGTG).

It belongs to the DnaJ family. Homodimer. It depends on Zn(2+) as a cofactor.

Its subcellular location is the cytoplasm. Its function is as follows. Participates actively in the response to hyperosmotic and heat shock by preventing the aggregation of stress-denatured proteins and by disaggregating proteins, also in an autonomous, DnaK-independent fashion. Unfolded proteins bind initially to DnaJ; upon interaction with the DnaJ-bound protein, DnaK hydrolyzes its bound ATP, resulting in the formation of a stable complex. GrpE releases ADP from DnaK; ATP binding to DnaK triggers the release of the substrate protein, thus completing the reaction cycle. Several rounds of ATP-dependent interactions between DnaJ, DnaK and GrpE are required for fully efficient folding. Also involved, together with DnaK and GrpE, in the DNA replication of plasmids through activation of initiation proteins. This chain is Chaperone protein DnaJ, found in Macrococcus caseolyticus (strain JCSC5402) (Macrococcoides caseolyticum).